The primary structure comprises 69 residues: Nodulin-3 (69 aa).

The signal sequence occupies residues 1–24 (MAKILKFVFAIILFFSLFLLSMEA).

The polypeptide is Nodulin-3 (ENOD3) (Pisum sativum (Garden pea)).